The primary structure comprises 448 residues: Glucose-6-phosphate isomerase (448 aa).

The active-site Proton donor is Glu290. Active-site residues include His311 and Lys425.

Belongs to the GPI family.

The protein localises to the cytoplasm. The catalysed reaction is alpha-D-glucose 6-phosphate = beta-D-fructose 6-phosphate. It participates in carbohydrate biosynthesis; gluconeogenesis. The protein operates within carbohydrate degradation; glycolysis; D-glyceraldehyde 3-phosphate and glycerone phosphate from D-glucose: step 2/4. In terms of biological role, catalyzes the reversible isomerization of glucose-6-phosphate to fructose-6-phosphate. The chain is Glucose-6-phosphate isomerase from Acetivibrio thermocellus (strain ATCC 27405 / DSM 1237 / JCM 9322 / NBRC 103400 / NCIMB 10682 / NRRL B-4536 / VPI 7372) (Clostridium thermocellum).